Here is a 104-residue protein sequence, read N- to C-terminus: Ribonucleotide reductase inhibitor protein SML1 (104 aa).

An N-acetylmethionine modification is found at methionine 1. Positions 43-62 are disordered; it reads PMLSTQNSMGSSASASASSL. Serine 56, serine 58, and serine 60 each carry phosphoserine; by DUN1.

In terms of assembly, homodimer; disulfide-linked. Interacts with RNR1. Phosphorylated by DUN1, a downstream effector of the Mec1/Rad53 checkpoint pathway, in response to DNA damage. This promotes ubiquitination of SML1 and targets it for degradation by the 26S proteasome.

The protein resides in the nucleus. The protein localises to the cytoplasm. Its function is as follows. Strong inhibitor of ribonucleotide reductase (RNR1) and is involved in regulating dNTP production. This Saccharomyces cerevisiae (strain ATCC 204508 / S288c) (Baker's yeast) protein is Ribonucleotide reductase inhibitor protein SML1 (SML1).